Here is a 255-residue protein sequence, read N- to C-terminus: Kallikrein-4 (255 aa).

Residues 1-25 (MMVTARTPWGWFLGCLILEVTGASA) form the signal peptide. A propeptide spanning residues 26–31 (SSVSSR) is cleaved from the precursor. In terms of domain architecture, Peptidase S1 spans 32–253 (IIQGQDCSPH…FTNWIQTIIQ (222 aa)). His41 is a binding site for Zn(2+). Cysteines 57 and 73 form a disulfide. His72 functions as the Charge relay system in the catalytic mechanism. Zn(2+) is bound at residue Glu92. Asp117 acts as the Charge relay system in catalysis. N-linked (GlcNAc...) asparagine glycosylation is found at Asn124 and Asn170. Intrachain disulfides connect Cys149–Cys214, Cys179–Cys193, and Cys204–Cys229. Ser208 functions as the Charge relay system in the catalytic mechanism.

This sequence belongs to the peptidase S1 family. Kallikrein subfamily. N-glycosylated. The N-glycan structures are of complex diantennary or triantennary type, which may be further modified with up to 2 sialic acid residues.

It is found in the secreted. In terms of biological role, has a major role in enamel formation. Required during the maturation stage of tooth development for clearance of enamel proteins and normal structural patterning of the crystalline matrix. This is Kallikrein-4 from Mus musculus (Mouse).